A 354-amino-acid polypeptide reads, in one-letter code: Abasic site processing protein HMCES (354 aa).

Cys2 serves as the catalytic Nucleophile. Cys2 is subject to Thiazolidine linkage to a ring-opened DNA abasic site. Glu127 is a catalytic residue. Glycyl lysine isopeptide (Lys-Gly) (interchain with G-Cter in SUMO2) cross-links involve residues Lys148 and Lys151. Ser160 is modified (phosphoserine). Lys276 is covalently cross-linked (Glycyl lysine isopeptide (Lys-Gly) (interchain with G-Cter in SUMO2)). The disordered stretch occupies residues 292–354; sequence ATKSPKKEDS…EPVAKRPYSQ (63 aa). Ser295 is subject to Phosphoserine. The span at 296–309 shows a compositional bias: basic and acidic residues; it reads PKKEDSKTPQKEES. A Glycyl lysine isopeptide (Lys-Gly) (interchain with G-Cter in SUMO2) cross-link involves residue Lys306. Position 322 is a phosphoserine (Ser322). Residues 332–338 carry the PIP-box motif; it reads GLLEQWL. Residues 337 to 348 are compositionally biased toward basic and acidic residues; the sequence is WLKREKEEEPVA. Residues Lys339 and Lys342 each participate in a glycyl lysine isopeptide (Lys-Gly) (interchain with G-Cter in SUMO2) cross-link.

This sequence belongs to the SOS response-associated peptidase family. Interacts (via PIP-box motif) with PCNA. In terms of processing, ubiquitinated; the covalent HMCES DNA-protein cross-link is ubiquitinated, leading to its degradation by the proteasome.

Its subcellular location is the chromosome. Formation and reversal of DNA-protein cross-link depends on DNA context. Catalyzes formation of the thiazolidine linkage in presence of abasic sites in single-stranded DNA. Mediates the reversal of the thiazolidine cross-link in presence of double stranded DNA. In terms of biological role, sensor of abasic sites in single-stranded DNA (ssDNA) required to preserve genome integrity by promoting error-free repair of abasic sites. Acts as an enzyme that recognizes and binds abasic sites in ssDNA at replication forks and chemically modifies the lesion by forming a covalent cross-link with DNA: forms a stable thiazolidine linkage between a ring-opened abasic site and the alpha-amino and sulfhydryl substituents of its N-terminal catalytic cysteine residue. Promotes error-free repair by protecting abasic sites from translesion synthesis (TLS) polymerases and endonucleases that are error-prone and would generate mutations and double-strand breaks. The HMCES DNA-protein cross-link is then either reversed or degraded. HMCES is able to catalyze the reversal of its thiazolidine cross-link and cycle between a cross-link and a non-cross-linked state depending on DNA context: mediates self-reversal of the thiazolidine cross-link in double stranded DNA, allowing APEX1 to initiate downstream repair of abasic sites. The HMCES DNA-protein cross-link can also be degraded by the SPRTN metalloprotease following unfolding by the BRIP1/FANCJ helicase. Has preference for ssDNA, but can also accommodate double-stranded DNA with 3' or 5' overhang (dsDNA), and dsDNA-ssDNA 3' junction. Plays a protective role during somatic hypermutation of immunoglobulin genes in B-cells: acts via its ability to form covalent cross-links with abasic sites, thereby limiting the accumulation of deletions in somatic hypermutation target regions. Also involved in class switch recombination (CSR) in B-cells independently of the formation of a DNA-protein cross-link: acts by binding and protecting ssDNA overhangs to promote DNA double-strand break repair through the microhomology-mediated alternative-end-joining (Alt-EJ) pathway. Acts as a protease: mediates autocatalytic processing of its N-terminal methionine in order to expose the catalytic cysteine. The protein is Abasic site processing protein HMCES of Pongo abelii (Sumatran orangutan).